Reading from the N-terminus, the 291-residue chain is tRNA dimethylallyltransferase (291 aa).

9–16 (GPTASGKT) contacts ATP. 11 to 16 (TASGKT) is a substrate binding site. The interaction with substrate tRNA stretch occupies residues 34-37 (DSLQ).

It belongs to the IPP transferase family. As to quaternary structure, monomer. Mg(2+) is required as a cofactor.

The enzyme catalyses adenosine(37) in tRNA + dimethylallyl diphosphate = N(6)-dimethylallyladenosine(37) in tRNA + diphosphate. Catalyzes the transfer of a dimethylallyl group onto the adenine at position 37 in tRNAs that read codons beginning with uridine, leading to the formation of N6-(dimethylallyl)adenosine (i(6)A). The chain is tRNA dimethylallyltransferase from Aster yellows witches'-broom phytoplasma (strain AYWB).